Here is a 155-residue protein sequence, read N- to C-terminus: Vasotocin-neurophysin VT 1 (155 aa).

A signal peptide spans 1–20 (MPDSTIPLLCVLGLLALSSA). Cysteine 21 and cysteine 26 are joined by a disulfide. Glycine 29 is modified (glycine amide). 7 disulfides stabilise this stretch: cysteine 41/cysteine 85, cysteine 44/cysteine 58, cysteine 52/cysteine 75, cysteine 59/cysteine 65, cysteine 92/cysteine 105, cysteine 99/cysteine 117, and cysteine 106/cysteine 111.

The protein belongs to the vasopressin/oxytocin family. In terms of processing, seven disulfide bonds are present in neurophysin.

Its subcellular location is the secreted. Functionally, vasotocin is probably an antidiuretic hormone. This Oncorhynchus masou (Cherry salmon) protein is Vasotocin-neurophysin VT 1.